Reading from the N-terminus, the 491-residue chain is 1-aminocyclopropane-1-carboxylate synthase (491 aa).

The residue at position 278 (lysine 278) is an N6-(pyridoxal phosphate)lysine.

This sequence belongs to the class-I pyridoxal-phosphate-dependent aminotransferase family. In terms of assembly, homodimer. The cofactor is pyridoxal 5'-phosphate.

The enzyme catalyses S-adenosyl-L-methionine = 1-aminocyclopropane-1-carboxylate + S-methyl-5'-thioadenosine + H(+). The protein operates within alkene biosynthesis; ethylene biosynthesis via S-adenosyl-L-methionine; ethylene from S-adenosyl-L-methionine: step 1/2. Functionally, catalyzes the formation of 1-aminocyclopropane-1-carboxylate, a direct precursor of ethylene in higher plants. This chain is 1-aminocyclopropane-1-carboxylate synthase (ACS1), found in Nicotiana tabacum (Common tobacco).